The following is a 580-amino-acid chain: Phosphatase and actin regulator 1 (580 aa).

Phosphoserine is present on residues serine 67 and serine 78. The residue at position 104 (threonine 104) is a Phosphothreonine. The Nuclear localization signal signature appears at 108-129 (RRRSKFANLGRIFKPWKWRKKK). Residues 138 to 163 (AALERKISMRQSREELIKRGVLKEIY) form an RPEL 1 repeat. 2 disordered regions span residues 331–355 (EQRV…TKAG) and 376–410 (KENV…SSLY). The span at 335–345 (PCSTSYHSSGL) shows a compositional bias: polar residues. A compositionally biased stretch (acidic residues) spans 395–407 (EEEEEEEDEDDDS). RPEL repeat units lie at residues 422-447 (DSLA…PRQT), 460-484 (TKLT…LKPR), and 498-523 (RRLT…IRFS). The tract at residues 462–494 (LTRRLSQRPTAEELEQRNILKPRNEQEEQEEKR) is disordered. Serine 467 carries the phosphoserine modification. Positions 471-494 (TAEELEQRNILKPRNEQEEQEEKR) are enriched in basic and acidic residues. A Phosphoserine modification is found at serine 505.

The protein belongs to the phosphatase and actin regulator family. As to quaternary structure, interacts (via RPEL repeats) with ACTA1 and PPP1CA; ACTA1 and PPP1CA compete for the same binding site. In terms of tissue distribution, detected in umbilical vein endothelial cells.

It localises to the cytoplasm. It is found in the synapse. The protein localises to the nucleus. Functionally, binds actin monomers (G actin) and plays a role in multiple processes including the regulation of actin cytoskeleton dynamics, actin stress fibers formation, cell motility and survival, formation of tubules by endothelial cells, and regulation of PPP1CA activity. Involved in the regulation of cortical neuron migration and dendrite arborization. This chain is Phosphatase and actin regulator 1 (PHACTR1), found in Homo sapiens (Human).